Reading from the N-terminus, the 32-residue chain is Yop proteins translocation protein A (32 aa).

This is Yop proteins translocation protein A (yscA) from Yersinia enterocolitica serotype O:8 / biotype 1B (strain NCTC 13174 / 8081).